We begin with the raw amino-acid sequence, 429 residues long: Histidinol dehydrogenase (429 aa).

NAD(+) contacts are provided by Y127, Q188, and N211. Substrate-binding residues include S234, Q256, and H259. Residues Q256 and H259 each contribute to the Zn(2+) site. Catalysis depends on proton acceptor residues E324 and H325. Positions 325, 358, 412, and 417 each coordinate substrate. Residue D358 participates in Zn(2+) binding. Zn(2+) is bound at residue H417.

It belongs to the histidinol dehydrogenase family. Requires Zn(2+) as cofactor.

The catalysed reaction is L-histidinol + 2 NAD(+) + H2O = L-histidine + 2 NADH + 3 H(+). It functions in the pathway amino-acid biosynthesis; L-histidine biosynthesis; L-histidine from 5-phospho-alpha-D-ribose 1-diphosphate: step 9/9. In terms of biological role, catalyzes the sequential NAD-dependent oxidations of L-histidinol to L-histidinaldehyde and then to L-histidine. This is Histidinol dehydrogenase from Bacillus cereus (strain ATCC 10987 / NRS 248).